A 92-amino-acid chain; its full sequence is Small ribosomal subunit protein bS18 (92 aa).

The protein belongs to the bacterial ribosomal protein bS18 family. Part of the 30S ribosomal subunit. Forms a tight heterodimer with protein bS6.

Functionally, binds as a heterodimer with protein bS6 to the central domain of the 16S rRNA, where it helps stabilize the platform of the 30S subunit. This chain is Small ribosomal subunit protein bS18, found in Cupriavidus taiwanensis (strain DSM 17343 / BCRC 17206 / CCUG 44338 / CIP 107171 / LMG 19424 / R1) (Ralstonia taiwanensis (strain LMG 19424)).